Reading from the N-terminus, the 1165-residue chain is Chitin synthase 3 (1165 aa).

The Cytoplasmic portion of the chain corresponds to 1-170 (MTGLNGDDPD…ETNDTLSFWQ (170 aa)). Disordered stretches follow at residues 19 to 53 (DEES…NNPD) and 74 to 97 (PSST…GSVR). A compositionally biased stretch (polar residues) spans 74–92 (PSSTGVNPNATRRSGSLRS). K136 participates in a covalent cross-link: Glycyl lysine isopeptide (Lys-Gly) (interchain with G-Cter in ubiquitin). The chain crosses the membrane as a helical span at residues 171 to 191 (MYCYFITFWAPAPILAFCGMP). Residues 192-340 (KKERQMAWRE…PNFTVENYAG (149 aa)) are Extracellular-facing. N-linked (GlcNAc...) asparagine glycosylation is found at N303 and N332. A helical transmembrane segment spans residues 341 to 354 (WNCHTSKEDRDAFY). At 355–452 (GLKSKADVYF…SKTVGCIASD (98 aa)) the chain is on the cytoplasmic side. A helical transmembrane segment spans residues 453–473 (VVLYVSLVFILSVVIIKFIIA). Residues 474–891 (CYFRWTVARK…EYYISHHQAK (418 aa)) are Extracellular-facing. At S537 the chain carries Phosphoserine. Position 538 is a phosphothreonine (T538). A helical transmembrane segment spans residues 892–910 (AFESVFGSVTCLPGCFSMY). The Cytoplasmic portion of the chain corresponds to 911–1029 (RIKSPKGSDG…SMQFVIGIEL (119 aa)). Residues 1030-1050 (IGTMVLPLAICFTIYVIIFAI) form a helical membrane-spanning segment. Residues 1051–1055 (VSKPT) are Extracellular-facing. Residues 1056–1076 (PVITLVLLAIILGLPGLIVVI) traverse the membrane as a helical segment. Residues 1077–1165 (TATRWSYLWW…RKEESDSFVA (89 aa)) lie on the Cytoplasmic side of the membrane.

It belongs to the chitin synthase family. Class IV subfamily. Homodimer. May form higher order oligomers. Seems to interact with BNI4 and SKT5 which link CHS3 to septins. Glycosylated. In terms of processing, palmitoylated by PFA4; required for proper export from the ER.

The protein resides in the cell membrane. The protein localises to the bud neck. Its subcellular location is the cytoplasmic vesicle membrane. The catalysed reaction is [(1-&gt;4)-N-acetyl-beta-D-glucosaminyl](n) + UDP-N-acetyl-alpha-D-glucosamine = [(1-&gt;4)-N-acetyl-beta-D-glucosaminyl](n+1) + UDP + H(+). Its function is as follows. Polymerizes chitin, a structural polymer of the cell wall and septum, by transferring the sugar moiety of UDP-GlcNAc to the non-reducing end of the growing chitin polymer. Appears to be responsible for synthesis of the majority of the chitin found in the cell wall periphery. It is involved in the synthesis of the chitin ring that forms in the cell wall just before bud emergence. This ring remains at the base of the bud as the bud grows and ultimately forms part of the bud scar marking the division site on the mother cell. Also catalyzes the synthesis of chitin laid down during mating and spore cell-wall synthesis. The sequence is that of Chitin synthase 3 from Saccharomyces cerevisiae (strain ATCC 204508 / S288c) (Baker's yeast).